The primary structure comprises 147 residues: uncharacterized protein (147 aa).

Belongs to the RTX toxin acyltransferase family.

This is an uncharacterized protein from Synechocystis sp. (strain ATCC 27184 / PCC 6803 / Kazusa).